The following is a 351-amino-acid chain: Phospho-N-acetylmuramoyl-pentapeptide-transferase (351 aa).

The next 10 helical transmembrane spans lie at 17-37 (MAYATIFAFLLSLIVGPHIIL), 62-82 (GIPTMGGILIFFCVFISLVFW), 85-105 (ILNVYFLIIVFVMFGFAFLGF), 130-150 (IIFSFISVSILYYLGGEHVSI), 163-183 (LGVFYIPFGMFILIAASNSFN), 190-210 (GLAIGLSIVITGALIIIAYIT), 230-250 (LVIFLGALLGGSFGFLWFNAY), 254-274 (IMMGDTGSLALGAILGMTALI), 281-301 (FSILAGVFIIETMSVIIQVIV), and 328-348 (QVVIRFWIIGLIFAIIALSTI).

This sequence belongs to the glycosyltransferase 4 family. MraY subfamily. Mg(2+) is required as a cofactor.

The protein localises to the cell inner membrane. The catalysed reaction is UDP-N-acetyl-alpha-D-muramoyl-L-alanyl-gamma-D-glutamyl-meso-2,6-diaminopimeloyl-D-alanyl-D-alanine + di-trans,octa-cis-undecaprenyl phosphate = di-trans,octa-cis-undecaprenyl diphospho-N-acetyl-alpha-D-muramoyl-L-alanyl-D-glutamyl-meso-2,6-diaminopimeloyl-D-alanyl-D-alanine + UMP. Its pathway is cell wall biogenesis; peptidoglycan biosynthesis. In terms of biological role, catalyzes the initial step of the lipid cycle reactions in the biosynthesis of the cell wall peptidoglycan: transfers peptidoglycan precursor phospho-MurNAc-pentapeptide from UDP-MurNAc-pentapeptide onto the lipid carrier undecaprenyl phosphate, yielding undecaprenyl-pyrophosphoryl-MurNAc-pentapeptide, known as lipid I. In Borreliella afzelii (strain PKo) (Borrelia afzelii), this protein is Phospho-N-acetylmuramoyl-pentapeptide-transferase.